Reading from the N-terminus, the 370-residue chain is Glutamate 5-kinase (370 aa).

Position 17 (Lys-17) interacts with ATP. Ser-57, Asp-144, and Asn-156 together coordinate substrate. Residues Ser-176–Asp-177 and Thr-220–Lys-226 contribute to the ATP site. Positions Ser-282–Pro-360 constitute a PUA domain.

The protein belongs to the glutamate 5-kinase family.

The protein resides in the cytoplasm. It carries out the reaction L-glutamate + ATP = L-glutamyl 5-phosphate + ADP. It functions in the pathway amino-acid biosynthesis; L-proline biosynthesis; L-glutamate 5-semialdehyde from L-glutamate: step 1/2. Its function is as follows. Catalyzes the transfer of a phosphate group to glutamate to form L-glutamate 5-phosphate. This Mycolicibacterium gilvum (strain PYR-GCK) (Mycobacterium gilvum (strain PYR-GCK)) protein is Glutamate 5-kinase.